Consider the following 61-residue polypeptide: Opistoporin-4 (61 aa).

Positions 45-61 (EAGQMPFDEFMDILHYY) are excised as a propeptide.

Belongs to the non-disulfide-bridged peptide (NDBP) superfamily. Long chain multifunctional peptide (group 2) family. Expressed by the venom gland.

It is found in the secreted. The protein localises to the target cell membrane. Functionally, at high concentrations, acts as a pore former in cellular membranes and causes the leakage of the cells. At submicromolar concentrations, degranulates granulocytes and has a weak hemolytic activity against human erythrocytes. Also strongly inhibits the production of superoxide anions. Has a strong antibacterial activity against Gram-negative bacteria but is less active against Gram-positive bacteria. Also has antifungal activity. This Opistophthalmus carinatus (African yellow leg scorpion) protein is Opistoporin-4.